The primary structure comprises 442 residues: UDP-glycosyltransferase 78D4 (442 aa).

UDP-alpha-D-glucose-binding positions include 322-324 (APQ), 339-347 (HGGWNSVLE), and 361-364 (FGDH).

Belongs to the UDP-glycosyltransferase family.

The sequence is that of UDP-glycosyltransferase 78D4 (UGT78D4) from Arabidopsis thaliana (Mouse-ear cress).